The chain runs to 423 residues: Enolase (423 aa).

Residue Gln-164 participates in (2R)-2-phosphoglycerate binding. The active-site Proton donor is the Glu-206. Residues Asp-243, Glu-289, and Asp-316 each coordinate Mg(2+). Residues Lys-341, Arg-370, Ser-371, and Lys-392 each coordinate (2R)-2-phosphoglycerate. Residue Lys-341 is the Proton acceptor of the active site.

Belongs to the enolase family. It depends on Mg(2+) as a cofactor.

The protein resides in the cytoplasm. It is found in the secreted. The protein localises to the cell surface. It catalyses the reaction (2R)-2-phosphoglycerate = phosphoenolpyruvate + H2O. Its pathway is carbohydrate degradation; glycolysis; pyruvate from D-glyceraldehyde 3-phosphate: step 4/5. Catalyzes the reversible conversion of 2-phosphoglycerate (2-PG) into phosphoenolpyruvate (PEP). It is essential for the degradation of carbohydrates via glycolysis. The protein is Enolase of Desulfotalea psychrophila (strain LSv54 / DSM 12343).